A 429-amino-acid polypeptide reads, in one-letter code: Isocitrate dehydrogenase [NADP] (429 aa).

Thr-108 is an NADP(+) binding site. Residues Ser-117, Asn-119, Arg-123, Arg-133, and Arg-156 each coordinate D-threo-isocitrate. Asp-308 serves as a coordination point for Mg(2+). NADP(+) contacts are provided by residues 340–346 (HGSAPKY), Asn-353, Tyr-393, and Arg-397.

This sequence belongs to the isocitrate and isopropylmalate dehydrogenases family. Homodimer. Mg(2+) is required as a cofactor. Mn(2+) serves as cofactor.

The catalysed reaction is D-threo-isocitrate + NADP(+) = 2-oxoglutarate + CO2 + NADPH. Its function is as follows. Catalyzes the oxidative decarboxylation of isocitrate to 2-oxoglutarate and carbon dioxide with the concomitant reduction of NADP(+). In Caldococcus noboribetus, this protein is Isocitrate dehydrogenase [NADP] (icd).